The sequence spans 905 residues: DNA mismatch repair protein MutS (905 aa).

The disordered stretch occupies residues 272–292 (KKPPLSPPSREATGSTMAIDP). 654-661 (GPNMAGKS) provides a ligand contact to ATP.

Belongs to the DNA mismatch repair MutS family.

In terms of biological role, this protein is involved in the repair of mismatches in DNA. It is possible that it carries out the mismatch recognition step. This protein has a weak ATPase activity. This Rhodopseudomonas palustris (strain BisB18) protein is DNA mismatch repair protein MutS.